Reading from the N-terminus, the 432-residue chain is Gamma-glutamyl phosphate reductase (432 aa).

This sequence belongs to the gamma-glutamyl phosphate reductase family.

The protein localises to the cytoplasm. It carries out the reaction L-glutamate 5-semialdehyde + phosphate + NADP(+) = L-glutamyl 5-phosphate + NADPH + H(+). It participates in amino-acid biosynthesis; L-proline biosynthesis; L-glutamate 5-semialdehyde from L-glutamate: step 2/2. Its function is as follows. Catalyzes the NADPH-dependent reduction of L-glutamate 5-phosphate into L-glutamate 5-semialdehyde and phosphate. The product spontaneously undergoes cyclization to form 1-pyrroline-5-carboxylate. In Corynebacterium glutamicum (strain R), this protein is Gamma-glutamyl phosphate reductase.